Here is an 86-residue protein sequence, read N- to C-terminus: Large ribosomal subunit protein bL31 (86 aa).

It belongs to the bacterial ribosomal protein bL31 family. Type A subfamily. In terms of assembly, part of the 50S ribosomal subunit.

Its function is as follows. Binds the 23S rRNA. The protein is Large ribosomal subunit protein bL31 of Parasynechococcus marenigrum (strain WH8102).